Reading from the N-terminus, the 559-residue chain is AP-4 complex accessory subunit tepsin (559 aa).

The region spanning 2-135 (LDRLAFLQQL…FSESIPSPSH (134 aa)) is the ENTH domain. 3 disordered regions span residues 131–157 (PSPS…APAL), 214–290 (AIPS…ESLD), and 472–491 (PNGA…SDPA). Low complexity-rich tracts occupy residues 144 to 154 (QSGMGSQASSA) and 266 to 281 (SRSS…DGQS). The segment covering 472 to 485 (PNGAANQKNPNGST) has biased composition (polar residues).

It is found in the golgi apparatus. The protein localises to the trans-Golgi network membrane. Its subcellular location is the cytoplasmic vesicle. The protein resides in the cytoplasm. It localises to the cytosol. May play a role in vesicular trafficking of proteins at the trans-Golgi network. The polypeptide is AP-4 complex accessory subunit tepsin (Xenopus laevis (African clawed frog)).